The primary structure comprises 198 residues: Nucleoid occlusion factor SlmA (198 aa).

Residues 10–70 (NRREEILQSL…SLIEFIEDSL (61 aa)) form the HTH tetR-type domain. The H-T-H motif DNA-binding region spans 33 to 52 (TTAKLAASVGVSEAALYRHF). Positions 117-145 (EQDKLQGRINQLFERIEAQLRQVLREKKM) form a coiled coil.

This sequence belongs to the nucleoid occlusion factor SlmA family. As to quaternary structure, homodimer. Interacts with FtsZ.

The protein resides in the cytoplasm. The protein localises to the nucleoid. Functionally, required for nucleoid occlusion (NO) phenomenon, which prevents Z-ring formation and cell division over the nucleoid. Acts as a DNA-associated cell division inhibitor that binds simultaneously chromosomal DNA and FtsZ, and disrupts the assembly of FtsZ polymers. SlmA-DNA-binding sequences (SBS) are dispersed on non-Ter regions of the chromosome, preventing FtsZ polymerization at these regions. The sequence is that of Nucleoid occlusion factor SlmA from Enterobacter sp. (strain 638).